We begin with the raw amino-acid sequence, 219 residues long: Small ribosomal subunit protein uS3 (219 aa).

Residues 38–106 enclose the KH type-2 domain; the sequence is IREYITARLK…RVHINILEVK (69 aa).

This sequence belongs to the universal ribosomal protein uS3 family. In terms of assembly, part of the 30S ribosomal subunit. Forms a tight complex with proteins S10 and S14.

Binds the lower part of the 30S subunit head. Binds mRNA in the 70S ribosome, positioning it for translation. This chain is Small ribosomal subunit protein uS3, found in Bacillus cytotoxicus (strain DSM 22905 / CIP 110041 / 391-98 / NVH 391-98).